The chain runs to 175 residues: Adenine phosphoribosyltransferase (175 aa).

This sequence belongs to the purine/pyrimidine phosphoribosyltransferase family. As to quaternary structure, homodimer.

It localises to the cytoplasm. It carries out the reaction AMP + diphosphate = 5-phospho-alpha-D-ribose 1-diphosphate + adenine. The protein operates within purine metabolism; AMP biosynthesis via salvage pathway; AMP from adenine: step 1/1. In terms of biological role, catalyzes a salvage reaction resulting in the formation of AMP, that is energically less costly than de novo synthesis. In Clavibacter michiganensis subsp. michiganensis (strain NCPPB 382), this protein is Adenine phosphoribosyltransferase.